The sequence spans 305 residues: Protoheme IX farnesyltransferase (305 aa).

9 consecutive transmembrane segments (helical) span residues 28–48 (VVLL…PGIV), 52–72 (VFLF…AINH), 102–122 (IFAA…VNLL), 123–143 (TALL…LYLK), 150–170 (IVIG…AVTG), 176–196 (ALIL…ALAI), 221–241 (INIL…FVIM), 243–263 (SGWI…YWAI), and 282–302 (IWYL…YLAL).

Belongs to the UbiA prenyltransferase family. Protoheme IX farnesyltransferase subfamily.

The protein resides in the cell inner membrane. It catalyses the reaction heme b + (2E,6E)-farnesyl diphosphate + H2O = Fe(II)-heme o + diphosphate. It functions in the pathway porphyrin-containing compound metabolism; heme O biosynthesis; heme O from protoheme: step 1/1. Converts heme B (protoheme IX) to heme O by substitution of the vinyl group on carbon 2 of heme B porphyrin ring with a hydroxyethyl farnesyl side group. This chain is Protoheme IX farnesyltransferase, found in Coxiella burnetii (strain CbuK_Q154) (Coxiella burnetii (strain Q154)).